The chain runs to 180 residues: Oligoribonuclease (180 aa).

An Exonuclease domain is found at 7 to 170; the sequence is LIWIDLEMTG…DDIRESIAEL (164 aa). The active site involves Y128.

Belongs to the oligoribonuclease family.

Its subcellular location is the cytoplasm. 3'-to-5' exoribonuclease specific for small oligoribonucleotides. This Pseudomonas paraeruginosa (strain DSM 24068 / PA7) (Pseudomonas aeruginosa (strain PA7)) protein is Oligoribonuclease.